The sequence spans 295 residues: MNYQWPSPGKLNLFLYVTGCRADGYHYLQTLFQLIEYGDTIKIFVTNNGRIRLFTIMNDLVCRDNLIIRAAKLLQYYCWPNKKPVFGADIFLDKILPIGSGLGGASSNAATVLMVLNQQWRCYLNKHVLMHLGLMLGADVPFFLYGRSAFAEGIGNILIPVFVPKKWYLILIPPVRISTFWGFQMYELENHCYSPFRSMRELLSVSFHNDFEEIIKKISPEIKIFFACLSQFALARLTGTGSCIFAEFKTEQLAYQVQSYLPSWVSSIITRGINLSPLHQKLLKCTAYSSIIFLS.

Residue lysine 10 is part of the active site. Residue 97-107 (PIGSGLGGASS) participates in ATP binding. Residue aspartate 139 is part of the active site.

The protein belongs to the GHMP kinase family. IspE subfamily. In terms of assembly, homodimer.

The enzyme catalyses 4-CDP-2-C-methyl-D-erythritol + ATP = 4-CDP-2-C-methyl-D-erythritol 2-phosphate + ADP + H(+). The protein operates within isoprenoid biosynthesis; isopentenyl diphosphate biosynthesis via DXP pathway; isopentenyl diphosphate from 1-deoxy-D-xylulose 5-phosphate: step 3/6. Functionally, catalyzes the phosphorylation of the position 2 hydroxy group of 4-diphosphocytidyl-2C-methyl-D-erythritol. This chain is 4-diphosphocytidyl-2-C-methyl-D-erythritol kinase, found in Blochmanniella pennsylvanica (strain BPEN).